The following is a 67-amino-acid chain: Large ribosomal subunit protein uL29 (67 aa).

This sequence belongs to the universal ribosomal protein uL29 family.

This chain is Large ribosomal subunit protein uL29 (rpmC), found in Halalkalibacterium halodurans (strain ATCC BAA-125 / DSM 18197 / FERM 7344 / JCM 9153 / C-125) (Bacillus halodurans).